A 160-amino-acid chain; its full sequence is Cyclic pyranopterin monophosphate synthase (160 aa).

Substrate is bound by residues 75 to 77 (LCH) and 113 to 114 (ME). The active site involves Asp-128.

The protein belongs to the MoaC family. As to quaternary structure, homohexamer; trimer of dimers.

The enzyme catalyses (8S)-3',8-cyclo-7,8-dihydroguanosine 5'-triphosphate = cyclic pyranopterin phosphate + diphosphate. It participates in cofactor biosynthesis; molybdopterin biosynthesis. Its function is as follows. Catalyzes the conversion of (8S)-3',8-cyclo-7,8-dihydroguanosine 5'-triphosphate to cyclic pyranopterin monophosphate (cPMP). The polypeptide is Cyclic pyranopterin monophosphate synthase (Haemophilus influenzae (strain PittEE)).